The sequence spans 506 residues: ATP synthase subunit alpha (506 aa).

An ATP-binding site is contributed by 170-177 (GDRQTGKT).

This sequence belongs to the ATPase alpha/beta chains family. F-type ATPases have 2 components, CF(1) - the catalytic core - and CF(0) - the membrane proton channel. CF(1) has five subunits: alpha(3), beta(3), gamma(1), delta(1), epsilon(1). CF(0) has four main subunits: a(1), b(1), b'(1) and c(9-12).

The protein resides in the cellular thylakoid membrane. It catalyses the reaction ATP + H2O + 4 H(+)(in) = ADP + phosphate + 5 H(+)(out). Produces ATP from ADP in the presence of a proton gradient across the membrane. The alpha chain is a regulatory subunit. The sequence is that of ATP synthase subunit alpha from Synechococcus sp. (strain CC9311).